A 339-amino-acid polypeptide reads, in one-letter code: Endospore coat-associated protein YutH (339 aa).

The protein belongs to the CotS family.

It is found in the forespore outer membrane. The protein localises to the spore coat. Involved in sporulation. The polypeptide is Endospore coat-associated protein YutH (yutH) (Bacillus subtilis (strain 168)).